The sequence spans 170 residues: Glycine cleavage system H protein, mitochondrial (170 aa).

The N-terminal 45 residues, 1–45, are a transit peptide targeting the mitochondrion; sequence MSLRVVRSVRAVACSLRIALASCPPRPWAPSAAAVRSLRTGSALL. The Lipoyl-binding domain occupies 63-145; it reads IGTVGISNFA…YEDGWLIKMT (83 aa). An N6-lipoyllysine modification is found at K104.

It belongs to the GcvH family. In terms of assembly, the glycine cleavage system is composed of four proteins: P (GLDC), T (GCST), L (DLD) and H (GCSH). Interacts with GLDC. Requires (R)-lipoate as cofactor.

Its subcellular location is the mitochondrion. Its function is as follows. The glycine cleavage system catalyzes the degradation of glycine. The H protein (GCSH) shuttles the methylamine group of glycine from the P protein (GLDC) to the T protein (GCST). Has a pivotal role in the lipoylation of enzymes involved in cellular energetics such as the mitochondrial dihydrolipoyllysine-residue acetyltransferase component of pyruvate dehydrogenase complex (DLAT), and the mitochondrial dihydrolipoyllysine-residue succinyltransferase component of 2-oxoglutarate dehydrogenase complex (DLST). The polypeptide is Glycine cleavage system H protein, mitochondrial (Rattus norvegicus (Rat)).